The following is a 180-amino-acid chain: Inner membrane assembly complex subunit 17 (180 aa).

The N-terminal 36 residues, 1 to 36 (MMIRNQLYRKCIIGGGRSILNGWVINGTVPNIGLRY), are a transit peptide targeting the mitochondrion. Residues 37-105 (LRSGIVTRSN…RKTQDIPIKR (69 aa)) are Mitochondrial matrix-facing. Residues 106-128 (FIRPTWMFLLMSSTFYLLGHYIW) traverse the membrane as a helical segment. Residues 129–163 (WKLEYDEVEKELDRQVTALEEELHNLIEEHRVHGE) adopt a coiled-coil conformation. Over 129–180 (WKLEYDEVEKELDRQVTALEEELHNLIEEHRVHGENEAIKNKKHKHWYKFWS) the chain is Mitochondrial intermembrane.

It belongs to the INA17 family. In terms of assembly, component of the inner membrane assembly (INA) complex, composed of INA17 and INA22. Interacts with a subset of F(1)F(0)-ATP synthase subunits of the F(1)-domain and the peripheral stalk.

It is found in the mitochondrion inner membrane. In terms of biological role, component of the INA complex (INAC) that promotes the biogenesis of mitochondrial F(1)F(0)-ATP synthase. INAC facilitates the assembly of the peripheral stalk and promotes the assembly of the catalytic F(1)-domain with the membrane-embedded F(0)-domain. This is Inner membrane assembly complex subunit 17 from Vanderwaltozyma polyspora (strain ATCC 22028 / DSM 70294 / BCRC 21397 / CBS 2163 / NBRC 10782 / NRRL Y-8283 / UCD 57-17) (Kluyveromyces polysporus).